The chain runs to 345 residues: High mobility group protein 20A (345 aa).

2 disordered regions span residues 1-130 (MEST…PFPE) and 166-206 (QKYQ…EKES). Polar residues-rich tracts occupy residues 22-38 (NNQP…SSQA) and 57-67 (LHQSGEQQLGN). Positions 80–94 (ARRGGWNKGRKRKRS) are enriched in basic residues. A DNA-binding region (HMG box) is located at residues 101-169 (PKAPLTGYVR…RYTKELQKYQ (69 aa)). The span at 112 to 125 (MNERREQLRTERPD) shows a compositional bias: basic and acidic residues. The segment covering 167–178 (KYQNTDAYQTYS) has biased composition (polar residues). Over residues 179–189 (RKAKSRQKGRQ) the composition is skewed to basic residues. Residues 227–285 (SKAREAELRQLRKSNMEFEERNAALQKHVESMRSAVQRLEAELSQEHERNSLLQQHLQS) adopt a coiled-coil conformation.

It is found in the nucleus. Functionally, plays a role in neuronal differentiation. This is High mobility group protein 20A (hmg20a) from Xenopus laevis (African clawed frog).